We begin with the raw amino-acid sequence, 98 residues long: NADH-ubiquinone oxidoreductase chain 4L (98 aa).

3 consecutive transmembrane segments (helical) span residues 1-21, 29-49, and 61-81; these read MSIV…GMLI, SLLC…LIIL, and IILL…LVMV.

It belongs to the complex I subunit 4L family. As to quaternary structure, core subunit of respiratory chain NADH dehydrogenase (Complex I) which is composed of 45 different subunits.

The protein localises to the mitochondrion inner membrane. It carries out the reaction a ubiquinone + NADH + 5 H(+)(in) = a ubiquinol + NAD(+) + 4 H(+)(out). In terms of biological role, core subunit of the mitochondrial membrane respiratory chain NADH dehydrogenase (Complex I) which catalyzes electron transfer from NADH through the respiratory chain, using ubiquinone as an electron acceptor. Part of the enzyme membrane arm which is embedded in the lipid bilayer and involved in proton translocation. This is NADH-ubiquinone oxidoreductase chain 4L (MT-ND4L) from Herpestes javanicus (Small Indian mongoose).